The following is a 303-amino-acid chain: Pantothenate synthetase (303 aa).

Residues 1-21 (MIATGHGGAERRTTAGDGTAR) form a disordered region. 48–55 (MGALHDGH) contacts ATP. Catalysis depends on His55, which acts as the Proton donor. A (R)-pantoate-binding site is contributed by Gln79. Gln79 provides a ligand contact to beta-alanine. 165 to 168 (GRKD) provides a ligand contact to ATP. Gln171 lines the (R)-pantoate pocket. An ATP-binding site is contributed by 202 to 205 (ASSR).

The protein belongs to the pantothenate synthetase family. In terms of assembly, homodimer.

The protein resides in the cytoplasm. The catalysed reaction is (R)-pantoate + beta-alanine + ATP = (R)-pantothenate + AMP + diphosphate + H(+). The protein operates within cofactor biosynthesis; (R)-pantothenate biosynthesis; (R)-pantothenate from (R)-pantoate and beta-alanine: step 1/1. Functionally, catalyzes the condensation of pantoate with beta-alanine in an ATP-dependent reaction via a pantoyl-adenylate intermediate. This chain is Pantothenate synthetase, found in Acidothermus cellulolyticus (strain ATCC 43068 / DSM 8971 / 11B).